The primary structure comprises 259 residues: Glutamate 5-kinase (259 aa).

Residue K18 coordinates ATP. Residues S54, D141, and N153 each coordinate substrate. Residue 173 to 174 (SD) participates in ATP binding.

It belongs to the glutamate 5-kinase family.

It is found in the cytoplasm. It catalyses the reaction L-glutamate + ATP = L-glutamyl 5-phosphate + ADP. It participates in amino-acid biosynthesis; L-proline biosynthesis; L-glutamate 5-semialdehyde from L-glutamate: step 1/2. Its function is as follows. Catalyzes the transfer of a phosphate group to glutamate to form L-glutamate 5-phosphate. The sequence is that of Glutamate 5-kinase from Clavibacter michiganensis subsp. michiganensis (strain NCPPB 382).